A 530-amino-acid chain; its full sequence is Serendipity locus protein alpha (530 aa).

As to expression, transient expression in blastoderm from nuclear cycle 11 to the onset of gastrulation.

Its subcellular location is the cytoplasm. It localises to the cell membrane. In terms of biological role, required for the cellularization of the syncytial blastoderm embryo. Involved in the localization of the actin filaments just prior to and during plasma membrane invagination. Sry-alpha together with nullo and bnk may provide auxiliary functions, by acting both to stabilize a large and dynamic microfilament structure and regulate its functions. This chain is Serendipity locus protein alpha (Sry-alpha), found in Drosophila melanogaster (Fruit fly).